A 341-amino-acid chain; its full sequence is Malate dehydrogenase 1, mitochondrial (341 aa).

The N-terminal 22 residues, 1–22 (MFRSMLVRSSASAKQAVIRRSF), are a transit peptide targeting the mitochondrion. NAD(+) is bound by residues 36 to 42 (GAAGGIG) and D62. 2 residues coordinate substrate: R109 and R115. NAD(+)-binding positions include N122 and 145 to 147 (ISN). Substrate is bound by residues N147 and R181. H205 serves as the catalytic Proton acceptor. M256 is an NAD(+) binding site.

The protein belongs to the LDH/MDH superfamily. MDH type 1 family. In terms of assembly, homodimer. Forms intramolecular disulfide bonds. In terms of tissue distribution, expressed in rosette leaves.

It is found in the mitochondrion matrix. The catalysed reaction is (S)-malate + NAD(+) = oxaloacetate + NADH + H(+). With respect to regulation, negatively regulated by ATP. Not redox-regulated. The formation of intramolecular disulfide bonds does not alter enzymatic activity. Functionally, catalyzes a reversible NAD-dependent dehydrogenase reaction involved in central metabolism and redox homeostasis between organelle compartments. Required for carbon dioxide and energy partitioning in leaves. May limit photorespiration during the dark phase. Its activity is essential to shuttle reductants out from the mitochondria to support the photorespiratory flux. Can convert 2-oxoglutarate to (S)-2-hydroxyglutarate in vitro. The polypeptide is Malate dehydrogenase 1, mitochondrial (Arabidopsis thaliana (Mouse-ear cress)).